A 212-amino-acid chain; its full sequence is Pyridoxine/pyridoxamine 5'-phosphate oxidase (212 aa).

Substrate contacts are provided by residues 8–11 and lysine 66; that span reads RREY. FMN contacts are provided by residues 61–66, 76–77, arginine 82, lysine 83, and glutamine 105; these read RIVLLK and FT. Substrate contacts are provided by tyrosine 123, arginine 127, and serine 131. FMN contacts are provided by residues 140–141 and tryptophan 185; that span reads QS. 191 to 193 is a binding site for substrate; sequence RLH. Residue arginine 195 coordinates FMN.

It belongs to the pyridoxamine 5'-phosphate oxidase family. As to quaternary structure, homodimer. Requires FMN as cofactor.

It carries out the reaction pyridoxamine 5'-phosphate + O2 + H2O = pyridoxal 5'-phosphate + H2O2 + NH4(+). The catalysed reaction is pyridoxine 5'-phosphate + O2 = pyridoxal 5'-phosphate + H2O2. It functions in the pathway cofactor metabolism; pyridoxal 5'-phosphate salvage; pyridoxal 5'-phosphate from pyridoxamine 5'-phosphate: step 1/1. Its pathway is cofactor metabolism; pyridoxal 5'-phosphate salvage; pyridoxal 5'-phosphate from pyridoxine 5'-phosphate: step 1/1. Functionally, catalyzes the oxidation of either pyridoxine 5'-phosphate (PNP) or pyridoxamine 5'-phosphate (PMP) into pyridoxal 5'-phosphate (PLP). This Shewanella halifaxensis (strain HAW-EB4) protein is Pyridoxine/pyridoxamine 5'-phosphate oxidase.